Here is a 178-residue protein sequence, read N- to C-terminus: 6,7-dimethyl-8-ribityllumazine synthase (178 aa).

5-amino-6-(D-ribitylamino)uracil contacts are provided by residues Y27, S58–E60, and C82–I84. A87–T88 provides a ligand contact to (2S)-2-hydroxy-3-oxobutyl phosphate. H90 (proton donor) is an active-site residue. N114 contributes to the 5-amino-6-(D-ribitylamino)uracil binding site. Residue R128 coordinates (2S)-2-hydroxy-3-oxobutyl phosphate.

Belongs to the DMRL synthase family.

It carries out the reaction (2S)-2-hydroxy-3-oxobutyl phosphate + 5-amino-6-(D-ribitylamino)uracil = 6,7-dimethyl-8-(1-D-ribityl)lumazine + phosphate + 2 H2O + H(+). It functions in the pathway cofactor biosynthesis; riboflavin biosynthesis; riboflavin from 2-hydroxy-3-oxobutyl phosphate and 5-amino-6-(D-ribitylamino)uracil: step 1/2. Catalyzes the formation of 6,7-dimethyl-8-ribityllumazine by condensation of 5-amino-6-(D-ribitylamino)uracil with 3,4-dihydroxy-2-butanone 4-phosphate. This is the penultimate step in the biosynthesis of riboflavin. This is 6,7-dimethyl-8-ribityllumazine synthase from Jannaschia sp. (strain CCS1).